The following is a 284-amino-acid chain: Bifunctional protein FolD (284 aa).

NADP(+)-binding positions include 164–166 (GTS) and I230.

Belongs to the tetrahydrofolate dehydrogenase/cyclohydrolase family. As to quaternary structure, homodimer.

The catalysed reaction is (6R)-5,10-methylene-5,6,7,8-tetrahydrofolate + NADP(+) = (6R)-5,10-methenyltetrahydrofolate + NADPH. It carries out the reaction (6R)-5,10-methenyltetrahydrofolate + H2O = (6R)-10-formyltetrahydrofolate + H(+). The protein operates within one-carbon metabolism; tetrahydrofolate interconversion. Its function is as follows. Catalyzes the oxidation of 5,10-methylenetetrahydrofolate to 5,10-methenyltetrahydrofolate and then the hydrolysis of 5,10-methenyltetrahydrofolate to 10-formyltetrahydrofolate. The sequence is that of Bifunctional protein FolD from Mycoplasma capricolum subsp. capricolum (strain California kid / ATCC 27343 / NCTC 10154).